The following is a 117-amino-acid chain: Resistin-like gamma (117 aa).

The signal sequence occupies residues 1–29 (MLTFNKMKTTTCSLLICISLLQLMVPVNT). 5 disulfides stabilise this stretch: Cys61-Cys114, Cys73-Cys113, Cys82-Cys99, Cys84-Cys101, and Cys88-Cys103.

It belongs to the resistin/FIZZ family. Homodimer. Heterodimer with RETNLB. In terms of tissue distribution, expressed in colon, lung, spleen, pancreas, ileum and bone marrow (at protein level). In colon, found throughout the crypt and surface epithelium, including goblet cells (at protein level). Highest expression is observed in bone marrow, spleen and lung, with lower levels in other tissues. Detected at low levels in granulocytes, but not found in monocytes or lymphocytes. Has very weak expression in white adipose tissue.

The protein resides in the secreted. Its function is as follows. Probable hormone. Promotes chemotaxis in myeloid cells. This chain is Resistin-like gamma, found in Mus musculus (Mouse).